The following is a 264-amino-acid chain: Tritrans,polycis-undecaprenyl-diphosphate synthase (geranylgeranyl-diphosphate specific) (264 aa).

Residue aspartate 43 is part of the active site. Aspartate 43 serves as a coordination point for Mg(2+). Substrate is bound by residues 44–47, tryptophan 48, histidine 60, and 88–90; these read GNRR and STE. The Proton acceptor role is filled by asparagine 91. Substrate-binding positions include phenylalanine 92, arginine 94, arginine 213, and 219–221; that span reads RIS. Glutamate 232 contributes to the Mg(2+) binding site.

The protein belongs to the UPP synthase family. In terms of assembly, homodimer. Mg(2+) is required as a cofactor.

It carries out the reaction geranylgeranyl diphosphate + 7 isopentenyl diphosphate = tri-trans,hepta-cis-undecaprenyl diphosphate + 7 diphosphate. Catalyzes the sequential condensation of isopentenyl diphosphate (IPP) with geranylgeranyl diphosphate (GGPP) to yield (2Z,6Z,10Z,14Z,18Z,22Z,26Z,30E,34E,38E)-undecaprenyl diphosphate (tritrans,heptacis-UPP). It is probably the precursor of glycosyl carrier lipids. The chain is Tritrans,polycis-undecaprenyl-diphosphate synthase (geranylgeranyl-diphosphate specific) from Pyrococcus abyssi (strain GE5 / Orsay).